The following is a 273-amino-acid chain: Ribosomal RNA small subunit methyltransferase A (273 aa).

N18, L20, G45, E66, D91, and N113 together coordinate S-adenosyl-L-methionine.

It belongs to the class I-like SAM-binding methyltransferase superfamily. rRNA adenine N(6)-methyltransferase family. RsmA subfamily.

It is found in the cytoplasm. It carries out the reaction adenosine(1518)/adenosine(1519) in 16S rRNA + 4 S-adenosyl-L-methionine = N(6)-dimethyladenosine(1518)/N(6)-dimethyladenosine(1519) in 16S rRNA + 4 S-adenosyl-L-homocysteine + 4 H(+). Specifically dimethylates two adjacent adenosines (A1518 and A1519) in the loop of a conserved hairpin near the 3'-end of 16S rRNA in the 30S particle. May play a critical role in biogenesis of 30S subunits. The polypeptide is Ribosomal RNA small subunit methyltransferase A (Shigella flexneri).